A 300-amino-acid chain; its full sequence is 4-hydroxy-tetrahydrodipicolinate synthase (300 aa).

Thr46 contacts pyruvate. Tyr135 functions as the Proton donor/acceptor in the catalytic mechanism. Lys163 serves as the catalytic Schiff-base intermediate with substrate. Val205 contacts pyruvate.

This sequence belongs to the DapA family. Homotetramer; dimer of dimers.

It localises to the cytoplasm. It carries out the reaction L-aspartate 4-semialdehyde + pyruvate = (2S,4S)-4-hydroxy-2,3,4,5-tetrahydrodipicolinate + H2O + H(+). It functions in the pathway amino-acid biosynthesis; L-lysine biosynthesis via DAP pathway; (S)-tetrahydrodipicolinate from L-aspartate: step 3/4. Functionally, catalyzes the condensation of (S)-aspartate-beta-semialdehyde [(S)-ASA] and pyruvate to 4-hydroxy-tetrahydrodipicolinate (HTPA). The chain is 4-hydroxy-tetrahydrodipicolinate synthase from Koribacter versatilis (strain Ellin345).